We begin with the raw amino-acid sequence, 416 residues long: Ena/VASP-like protein (416 aa).

The region spanning 1 to 112 (MSEQSICQAR…NAMLFALNIM (112 aa)) is the WH1 domain. Over residues 114–129 (SQEGGPSSQRQVQNGP) the composition is skewed to polar residues. Disordered regions lie at residues 114–133 (SQEGGPSSQRQVQNGPSPDE) and 141–369 (VMEQ…PAGS). Serine 130 carries the post-translational modification Phosphoserine. A compositionally biased stretch (basic and acidic residues) spans 141 to 157 (VMEQHQQQRQESLERRT). The span at 169 to 180 (PSSAASAPVSCS) shows a compositional bias: low complexity. Over residues 181 to 206 (GPPPPPPPPVPPPPTGATPPPPPPLP) the composition is skewed to pro residues. Residues 222–242 (GLAAAIAGAKLRRVQRPEDAS) form an EVH2 block A region. Residues 222–413 (GLAAAIAGAK…DAIRQELSGI (192 aa)) are EVH2. Residues 231-234 (KLRR) carry the KLKR motif. The segment covering 242 to 253 (SGGSSPSGTSKS) has biased composition (low complexity). 2 positions are modified to phosphoserine: serine 246 and serine 259. Residues 265–282 (GGLMEEMNKLLAKRRKAA) form an EVH2 block B region. The segment covering 299-320 (EDPSTSPSPGTRAASQPPNSSE) has biased composition (polar residues). Residues serine 304, serine 306, serine 329, serine 331, serine 341, serine 349, serine 354, and serine 369 each carry the phosphoserine modification. A compositionally biased stretch (basic and acidic residues) spans 321–331 (AGRKPWERSNS). The required for interaction with ZDHHC17 stretch occupies residues 342-362 (RTPSVAKSPEAKSPLQSQPHS). The tract at residues 379–413 (DLDRMKQEILEEVVRELHKVKEEIIDAIRQELSGI) is EVH2 block C.

The protein belongs to the Ena/VASP family. In terms of assembly, homotetramer. Binds to the SH3 domains of ABL1, LYN and SRC. Also binds to profilin, with preference for isoform IIa of PFN2, and the WW domain of APBB1/FE65. Binds to SEMA6A. Interacts, via the Pro-rich region, with the C-terminal SH3 domain of DNMBP. Interacts with RAPH1. Binds, via the EVH1 domain, the Pro-rich domain of Listeria monocytogenes actA. Binds, via the EVH1 domain, the Pro-rich domain of ZYX. Interacts with FYB1. Interacts with ZDHHC17. Phosphorylated by PKA; phosphorylation abolishes binding to SH3 domains of ABL and SRC.

It is found in the cytoplasm. Its subcellular location is the cytoskeleton. It localises to the stress fiber. The protein resides in the cell projection. The protein localises to the lamellipodium. Functionally, ena/VASP proteins are actin-associated proteins involved in a range of processes dependent on cytoskeleton remodeling and cell polarity such as axon guidance and lamellipodial and filopodial dynamics in migrating cells. EVL enhances actin nucleation and polymerization. In Homo sapiens (Human), this protein is Ena/VASP-like protein (EVL).